Reading from the N-terminus, the 347-residue chain is Actin-like protein MamK (347 aa).

ATP contacts are provided by residues Lys-9, 20–21, and Asp-76; that span reads TS. Residue Glu-143 coordinates Mg(2+). ATP contacts are provided by residues 164 to 166, 218 to 222, and Gly-289; these read AGT and KEQFS.

This sequence belongs to the FtsA/MreB family. MamK subfamily. Forms cytoplasmic filaments. Filaments are parallel (polar) and double-helical. MamK subunits from each of the two strands are juxtaposed, each monomer binds ADP. At cell poles and septa interacts with methyl-accepting chemotaxis protein Amb0944 (MCP10). Forms filaments with MamK-like protein.

It is found in the cytoplasm. It localises to the cytoskeleton. The protein localises to the magnetosome membrane. It catalyses the reaction ATP + H2O = ADP + phosphate + H(+). Filament turnover is promoted by MamJ and/or LimJ which have overlapping function; at least one other protein is required for turnover. MamK filament dynamics are probably required for the assembly or maintenance of the magnetosome chain. Its function is as follows. Protein with ATPase activity which forms dynamic cytoplasmic filaments (probably with paralog MamK-like) that organize magnetosomes into long chains running parallel to the long axis of the cell. Turnover of MamK filaments is probably promoted by MamK-like, which provides a monomer pool. Forms twisted filaments in the presence of ATP or GTP. Serves to close gaps between magnetosomes in the chain. Interaction with MCP10 is involved in controlling the response to magnetic fields, possibly by controlling flagellar rotation. Expression in E.coli yields a filament in the cell's longitudinal axis; the protein nucleates at several sites and one extremity of the filament is located at the cell pole. This Paramagnetospirillum magneticum (strain ATCC 700264 / AMB-1) (Magnetospirillum magneticum) protein is Actin-like protein MamK (mamK).